Consider the following 110-residue polypeptide: MNQQNQKISNPQTPVPTTSEMNDRDFVNELLTTEKYMTTAYCTALHEFSHESLYQDIQSIFDESQKAQRKLYDLMFQYGWYSVEAEDSQKLQQSYQKFQQTIQQQSPYQQ.

Positions 1–20 are enriched in polar residues; the sequence is MNQQNQKISNPQTPVPTTSE. A disordered region spans residues 1–24; the sequence is MNQQNQKISNPQTPVPTTSEMNDR.

This is an uncharacterized protein from Bacillus subtilis (strain 168).